We begin with the raw amino-acid sequence, 294 residues long: Pyridoxal 5'-phosphate synthase subunit PdxS (294 aa).

A D-ribose 5-phosphate-binding site is contributed by Asp24. Lys81 functions as the Schiff-base intermediate with D-ribose 5-phosphate in the catalytic mechanism. Gly153 contributes to the D-ribose 5-phosphate binding site. Arg165 provides a ligand contact to D-glyceraldehyde 3-phosphate. Residues Gly214 and 235-236 (GS) contribute to the D-ribose 5-phosphate site.

It belongs to the PdxS/SNZ family. As to quaternary structure, in the presence of PdxT, forms a dodecamer of heterodimers.

It catalyses the reaction aldehydo-D-ribose 5-phosphate + D-glyceraldehyde 3-phosphate + L-glutamine = pyridoxal 5'-phosphate + L-glutamate + phosphate + 3 H2O + H(+). The protein operates within cofactor biosynthesis; pyridoxal 5'-phosphate biosynthesis. Functionally, catalyzes the formation of pyridoxal 5'-phosphate from ribose 5-phosphate (RBP), glyceraldehyde 3-phosphate (G3P) and ammonia. The ammonia is provided by the PdxT subunit. Can also use ribulose 5-phosphate and dihydroxyacetone phosphate as substrates, resulting from enzyme-catalyzed isomerization of RBP and G3P, respectively. In Bacillus velezensis (strain DSM 23117 / BGSC 10A6 / LMG 26770 / FZB42) (Bacillus amyloliquefaciens subsp. plantarum), this protein is Pyridoxal 5'-phosphate synthase subunit PdxS.